Reading from the N-terminus, the 1937-residue chain is Myosin-8 (1937 aa).

The 50-residue stretch at 35–84 (DAKTSVFVAEPKESYVKSVIQSKDGGKVTVKTESGATLTVKEDQVFPMNP) folds into the Myosin N-terminal SH3-like domain. A phosphothreonine mark is found at threonine 66 and threonine 71. Residues 88–781 (DKIEDMAMMT…LLGLLEEMRD (694 aa)) enclose the Myosin motor domain. Lysine 132 is subject to N6,N6,N6-trimethyllysine. Position 181–188 (181–188 (GESGAGKT)) interacts with ATP. Position 389 is a phosphotyrosine (tyrosine 389). At threonine 419 the chain carries Phosphothreonine. At tyrosine 424 the chain carries Phosphotyrosine. Serine 625 carries the phosphoserine modification. Positions 658-680 (LNKLMTNLRSTHPHFVRCIIPNE) are actin-binding. Histidine 756 is modified (pros-methylhistidine). The actin-binding stretch occupies residues 760 to 774 (KFGHTKVFFKAGLLG). Positions 781–813 (DEKLAQIITRTQAVCRGYLMRVEYQKMLLRRES) constitute an IQ domain. Residues 842-1937 (LLKSAETEKE…REVHTKISAE (1096 aa)) adopt a coiled-coil conformation. Serine 1091 and serine 1095 each carry phosphoserine. A disordered region spans residues 1125–1171 (IEAERASRAKAEKQRSDLSRELEEISERLEEAGGATSAQVEMNKKRE). Basic and acidic residues predominate over residues 1127–1155 (AERASRAKAEKQRSDLSRELEEISERLEE). Residues serine 1161 and serine 1236 each carry the phosphoserine modification. Threonine 1254 carries the post-translational modification Phosphothreonine. Serine 1260 bears the Phosphoserine mark. Position 1285 is a phosphothreonine (threonine 1285). Phosphoserine occurs at positions 1291, 1302, and 1305. The residue at position 1463 (tyrosine 1463) is a Phosphotyrosine. Position 1466 is a phosphothreonine (threonine 1466). A Phosphotyrosine modification is found at tyrosine 1491. The residue at position 1494 (serine 1494) is a Phosphoserine. Threonine 1500 carries the phosphothreonine modification. At serine 1513 the chain carries Phosphoserine. At threonine 1516 the chain carries Phosphothreonine. Serine 1553, serine 1573, serine 1602, serine 1713, and serine 1725 each carry phosphoserine. Residue threonine 1729 is modified to Phosphothreonine. Serine 1738 carries the phosphoserine modification.

The protein belongs to the TRAFAC class myosin-kinesin ATPase superfamily. Myosin family. In terms of assembly, muscle myosin is a hexameric protein that consists of 2 heavy chain subunits (MHC), 2 alkali light chain subunits (MLC) and 2 regulatory light chain subunits (MLC-2).

The protein localises to the cytoplasm. It localises to the myofibril. Muscle contraction. The sequence is that of Myosin-8 (Myh8) from Mus musculus (Mouse).